The sequence spans 129 residues: DNA-directed RNA polymerase subunit omega (129 aa).

Positions 76–101 (EVDEPEPDPVTLAASAADGEDDDQPE) are disordered.

It belongs to the RNA polymerase subunit omega family. In terms of assembly, the RNAP catalytic core consists of 2 alpha, 1 beta, 1 beta' and 1 omega subunit. When a sigma factor is associated with the core the holoenzyme is formed, which can initiate transcription.

It carries out the reaction RNA(n) + a ribonucleoside 5'-triphosphate = RNA(n+1) + diphosphate. In terms of biological role, promotes RNA polymerase assembly. Latches the N- and C-terminal regions of the beta' subunit thereby facilitating its interaction with the beta and alpha subunits. This Agrobacterium fabrum (strain C58 / ATCC 33970) (Agrobacterium tumefaciens (strain C58)) protein is DNA-directed RNA polymerase subunit omega.